The chain runs to 530 residues: Chaperone Ric-8A (530 aa).

The residue at position 435 (S435) is a Phosphoserine. Residues T440 and T442 each carry the phosphothreonine modification. 4 positions are modified to phosphoserine: S501, S522, S523, and S527.

This sequence belongs to the synembryn family. In terms of assembly, interacts with GDP-bound G alpha proteins GNAI1, GNAO1 and GNAQ, and with GNA13 with lower affinity. Does not interact with G-alpha proteins when they are in complex with subunits beta and gamma. Interacts (via C-terminus) with RGS14; the interaction stimulates the dissociation of the complex between RGS14 and the active GTP-bound form of GNAI1. Interacts with NCS1; interaction is favored in the absence of Ca(2+) and myristoylation of NCS1 is not required. Post-translationally, phosphorylated at Ser-435 and Thr-440 by CK2, stabilizing its interface with G alpha proteins.

The protein localises to the cytoplasm. The protein resides in the cell cortex. Chaperone that specifically binds and folds nascent G alpha proteins prior to G protein heterotrimer formation, promoting their stability and activity: folds GNAI1, GNAO1, GNA13 and GNAQ. Does not fold G(s) G-alpha proteins GNAS nor GNAL. Also acts as a guanine nucleotide exchange factor (GEF) for G alpha proteins by stimulating exchange of bound GDP for free GTP. Involved in regulation of microtubule pulling forces during mitotic movement of chromosomes by stimulating G(i)-alpha protein (GNAI1), possibly leading to release G(i)-alpha-GTP and NuMA proteins from the NuMA-GPSM2-G(i)-alpha-GDP complex. Also acts as an activator for G(q)-alpha (GNAQ) protein by enhancing the G(q)-coupled receptor-mediated ERK activation. This chain is Chaperone Ric-8A (RIC8A), found in Bos taurus (Bovine).